The chain runs to 406 residues: MMKQVDMYKRVALIALMGMSLAGCSTVKGWFAGKDAAAKKAQEPAELVKFEPSVKVDKLWSTGVGKGEGHIGVRQRPAVADGKVYAAAITGGVQALDLQTGKRVWEYKPKKEERNDRKFKQRLSGGPGVGEGLVVIGTLSGDVIALNQADGTEKWRAKVPNEVIAAPAIAQSLVLVRSNDGRVSAFDAATGERRWFHAEEGPTLSVRGNAPIVTGPGVVFVGNDVGTLSALALQDGRPLWEQAIGVPEGRTELERMSDVDGAPVLDGTTLYATSFKNETLALEGPSGRPLWTRDHGGAGGPGVSSSVVVVADNAGSVWGLDKSSGAAMWSQAALARRSLTGVAIQGDYAVVGDYKGYLHWLKLSDGALAARARAGRDTLLAQPLVVDGILLVQNTDGDITAFRLAQ.

A signal peptide spans 1–23 (MMKQVDMYKRVALIALMGMSLAG). Cys24 carries N-palmitoyl cysteine lipidation. Cys24 carries S-diacylglycerol cysteine lipidation.

Belongs to the BamB family. In terms of assembly, part of the Bam complex.

The protein localises to the cell outer membrane. Functionally, part of the outer membrane protein assembly complex, which is involved in assembly and insertion of beta-barrel proteins into the outer membrane. In Xanthomonas campestris pv. campestris (strain ATCC 33913 / DSM 3586 / NCPPB 528 / LMG 568 / P 25), this protein is Outer membrane protein assembly factor BamB.